Here is a 438-residue protein sequence, read N- to C-terminus: Neutral metalloprotease ShpI (438 aa).

The signal sequence occupies residues 1–26; it reads MINKKKLVTSLVTSSLLATFTLGSFA. The propeptide occupies 27–101; it reads DAHTYIINNE…KSENALSNSK (75 aa). His-242 provides a ligand contact to Zn(2+). Glu-243 is an active-site residue. Residues His-246 and Glu-269 each contribute to the Zn(2+) site.

This sequence belongs to the peptidase M30 family. The cofactor is Zn(2+). Several different N-terminal ends may be produced, the favored N-terminus is position 102.

The protein localises to the secreted. With respect to regulation, inhibited by metal- and zinc-specific inhibitors, such as EDTA and 1,10-phenanthroline in vitro. Is resistant to all inhibitors of serine, cysteine and aspartic proteases. Its function is as follows. Protease that has a low substrate specificity. Catalyzes the hydrolysis of glucagon, melittin and oxidized beta-insulin at various positions in vitro. Is not able to cleave elastin or the synthetic substrates FAGLA (a substrate for neutral proteinases) and FALGPA (a substrate for collagenase). The sequence is that of Neutral metalloprotease ShpI from Staphylococcus hyicus.